The sequence spans 978 residues: Mineralocorticoid receptor (978 aa).

The interval 1–602 (METKGYHSLP…STGSSRPSKI (602 aa)) is modulating. Over residues 234–243 (SLTCSPSVEN) the composition is skewed to polar residues. Disordered regions lie at residues 234 to 331 (SLTC…STVG) and 353 to 372 (GAIQ…AHDV). Phosphoserine occurs at positions 250, 259, 283, 287, and 299. Low complexity predominate over residues 259–300 (SPLSSPLSSMKSPISSPPSHCSVKSPVSSPNNVPLRSSVSSP). A compositionally biased stretch (polar residues) spans 301 to 331 (ANLNNSRCSVSSPSNTNNRSTLSSPTASTVG). 8 residues coordinate Zn(2+): C603, C606, C620, C623, C637, C643, C653, and C656. 2 NR C4-type zinc fingers span residues 603 to 623 (CLVC…CGSC) and 637 to 661 (CAGR…LQKC). A DNA-binding region (nuclear receptor) is located at residues 603-666 (CLVCGDEASG…RLQKCLQAGM (64 aa)). The hinge stretch occupies residues 667–719 (NLGARKSKKLGKLKGLHEEQPQQPPPPPPQSPEEGTTYIAPTKEPSVNSALVP). The interval 681-706 (GLHEEQPQQPPPPPPQSPEEGTTYIA) is disordered. The span at 688 to 697 (QQPPPPPPQS) shows a compositional bias: pro residues. The NR LBD domain occupies 720-958 (QLASITRALT…EFPAMLVEII (239 aa)). 21-hydroxyprogesterone is bound by residues N764 and Q770. Aldosterone-binding residues include N764 and Q770. Progesterone-binding residues include N764 and Q770. The important for coactivator binding stretch occupies residues 776-779 (KWAK). 21-hydroxyprogesterone contacts are provided by R811 and T939. Aldosterone contacts are provided by R811 and T939. 2 residues coordinate progesterone: R811 and T939.

The protein belongs to the nuclear hormone receptor family. NR3 subfamily. As to quaternary structure, heteromultimeric cytoplasmic complex with HSP90, HSP70, and FKBP4, in the absence of ligand. After ligand binding, it translocates to the nucleus and binds to DNA as a homodimer and as a heterodimer with NR3C1. Binds the coactivator NCOA2. May interact with HSD11B2 in the absence of ligand. Binds the coactivators NCOA1, TIF1 and NRIP1. Post-translationally, phosphorylated. In terms of tissue distribution, expressed in heart and kidney.

It is found in the cytoplasm. Its subcellular location is the nucleus. The protein resides in the endoplasmic reticulum membrane. Functionally, receptor for both mineralocorticoids (MC) such as aldosterone and glucocorticoids (GC) such as corticosterone or cortisol. Binds to mineralocorticoid response elements (MRE) and transactivates target genes. The effect of MC is to increase ion and water transport and thus raise extracellular fluid volume and blood pressure and lower potassium levels. This is Mineralocorticoid receptor (Nr3c2) from Mus musculus (Mouse).